A 781-amino-acid polypeptide reads, in one-letter code: Catenin beta-1 (781 aa).

Positions 34–56 (GIHSGATTTAPSLSGKGNPEDED) are disordered. ARM repeat units lie at residues 141–180 (NYQDDAELATRAIPELTKLLNDEDQVVVNKAAVMVHQLSK), 225–264 (REGLLAIFKSGGIPALVKMLGSPVDSVLFYAITTLHNLLL), 267–306 (EGAKMAVRLAGGLQKMVALLNKTNVKFLAITTDCLQILAY), 351–390 (SSNKPAIVEAGGMQALGLHLTDSSQRLVQNCLWTLRNLSD), 391–429 (AATKQEGMEGLLGTLVQLLGSDDINVVTCAAGILSNLTC), 432–473 (YKNK…HLTS), 479–519 (EMAQ…NLAL), 521–562 (PANH…QFVE), 584–623 (IHNRIVIRGLNTIPLFVQLLYSPIENIQRVAAGVLCDVAQ), and 625–664 (KEAAEAIEAEGATAPLTELLHSRNEGVATYAAAVLFRMSE). Positions 735–745 (MDHDMGGHHPG) are enriched in basic and acidic residues. A disordered region spans residues 735 to 781 (MDHDMGGHHPGADYPVDGLPDLSHAQDLMDGLPPGDSNQLAWFDTDL).

This sequence belongs to the beta-catenin family. In terms of assembly, interacts with EP-Cadherin/CDH3. Interacts with custos; the interaction is positively regulated by Wnt stimulation. Post-translationally, phosphorylation by gsk3b promotes ubiquitination and subsequent degradation by the proteasome. Ubiquitinated when phosphorylated by gsk3b, leading to its degradation. Expressed at intercalated disks in the heart (at protein level).

The protein resides in the cytoplasm. It is found in the nucleus. It localises to the cell membrane. Functionally, key downstream component of the canonical Wnt signaling pathway. In the absence of Wnt, forms a complex with axin1, axin2, apc, csnk1a1 and gsk3b that promotes phosphorylation on N-terminal Ser and Thr residues and ubiquitination of ctnnb1 and its subsequent degradation by the proteasome. In the presence of Wnt ligand, ctnnb1 is not ubiquitinated and accumulates in the nucleus, where it acts as a coactivator for transcription factors of the TCF/LEF family, leading to activate Wnt responsive genes. Plays a key role in dorsoventral patterning: in prospective ventral blastomeres, its down-regulation by axin1 and axin2 leads to inhibit the Wnt signaling pathway, while in prospective dorsal blastomeres, degradation of axin results in stabilization and nuclear translocation of ctnnb1. This Xenopus laevis (African clawed frog) protein is Catenin beta-1.